A 307-amino-acid polypeptide reads, in one-letter code: L-lactate dehydrogenase (307 aa).

Residues Val-13, Asp-34, Arg-39, Tyr-64, and 78-79 (GV) each bind NAD(+). Residue Arg-87 participates in substrate binding. Ser-100 contacts NAD(+). 119–122 (NPVD) contributes to the substrate binding site. Thr-142 serves as a coordination point for NAD(+). 147–150 (DSAR) contributes to the substrate binding site. His-174 (proton acceptor) is an active-site residue. Thr-224 provides a ligand contact to substrate.

The protein belongs to the LDH/MDH superfamily. LDH family. In terms of assembly, homotetramer.

The protein localises to the cytoplasm. It catalyses the reaction (S)-lactate + NAD(+) = pyruvate + NADH + H(+). Its pathway is fermentation; pyruvate fermentation to lactate; (S)-lactate from pyruvate: step 1/1. Catalyzes the conversion of lactate to pyruvate. The chain is L-lactate dehydrogenase from Lactobacillus delbrueckii subsp. bulgaricus (strain ATCC BAA-365 / Lb-18).